The following is a 189-amino-acid chain: uncharacterized protein (189 aa).

In terms of domain architecture, HTH tetR-type spans 9–69; that stretch reads ADTGGRILRA…SMLTSHIAAV (61 aa). Positions 32 to 51 form a DNA-binding region, H-T-H motif; sequence TLAEIARRAGVSRPTVYRRW.

This is an uncharacterized protein from Mycobacterium bovis (strain ATCC BAA-935 / AF2122/97).